The following is a 548-amino-acid chain: Copine-2 (548 aa).

2 C2 domains span residues aspartate 6 to leucine 131 and proline 138 to isoleucine 263. Ca(2+) contacts are provided by aspartate 39, aspartate 45, aspartate 97, aspartate 99, serine 102, aspartate 109, aspartate 170, aspartate 176, aspartate 232, aspartate 234, and aspartate 240. Positions threonine 247–cysteine 304 are linker region. Residues glutamine 305 to proline 507 form the VWFA domain.

It belongs to the copine family. It depends on Ca(2+) as a cofactor.

It is found in the cytoplasm. The protein localises to the nucleus. The protein resides in the cell membrane. Functionally, calcium-dependent phospholipid-binding protein that plays a role in calcium-mediated intracellular processes. Exhibits calcium-dependent cell membrane binding properties. This is Copine-2 from Mus musculus (Mouse).